The chain runs to 407 residues: Phosphopentomutase (407 aa).

6 residues coordinate Mn(2+): Asp-10, Asp-306, His-311, Asp-347, His-348, and His-359.

Belongs to the phosphopentomutase family. The cofactor is Mn(2+).

The protein localises to the cytoplasm. The enzyme catalyses 2-deoxy-alpha-D-ribose 1-phosphate = 2-deoxy-D-ribose 5-phosphate. It carries out the reaction alpha-D-ribose 1-phosphate = D-ribose 5-phosphate. It participates in carbohydrate degradation; 2-deoxy-D-ribose 1-phosphate degradation; D-glyceraldehyde 3-phosphate and acetaldehyde from 2-deoxy-alpha-D-ribose 1-phosphate: step 1/2. Isomerase that catalyzes the conversion of deoxy-ribose 1-phosphate (dRib-1-P) and ribose 1-phosphate (Rib-1-P) to deoxy-ribose 5-phosphate (dRib-5-P) and ribose 5-phosphate (Rib-5-P), respectively. The protein is Phosphopentomutase of Shigella dysenteriae serotype 1 (strain Sd197).